We begin with the raw amino-acid sequence, 323 residues long: Cuticle collagen 39 (323 aa).

An N-terminal signal peptide occupies residues Met1–Ile28. A compositionally biased stretch (polar residues) spans Gln80–Asn89. The interval Gln80–Arg293 is disordered. Triple-helical region stretches follow at residues Gly93–Lys125, Gly138–Arg200, and Gly203–Asp265. A compositionally biased stretch (gly residues) spans Gly108–Gly117. Residues Pro136 to Pro146 show a composition bias toward low complexity. The span at Gly159 to Gly168 shows a compositional bias: gly residues. Residues Pro169–Pro191 show a composition bias toward low complexity. Residues Gly224 to Gly233 show a composition bias toward gly residues. A compositionally biased stretch (low complexity) spans Pro234 to Ala267.

Belongs to the cuticular collagen family. Collagen polypeptide chains are complexed within the cuticle by disulfide bonds and other types of covalent cross-links.

Nematode cuticles are composed largely of collagen-like proteins. The cuticle functions both as an exoskeleton and as a barrier to protect the worm from its environment. This chain is Cuticle collagen 39 (col-39), found in Caenorhabditis elegans.